The following is a 156-amino-acid chain: 6,7-dimethyl-8-ribityllumazine synthase (156 aa).

Residues phenylalanine 22, 57–59 (AYE), and 81–83 (TVI) contribute to the 5-amino-6-(D-ribitylamino)uracil site. Position 86 to 87 (86 to 87 (GT)) interacts with (2S)-2-hydroxy-3-oxobutyl phosphate. Histidine 89 functions as the Proton donor in the catalytic mechanism. Phenylalanine 114 is a binding site for 5-amino-6-(D-ribitylamino)uracil. Arginine 128 provides a ligand contact to (2S)-2-hydroxy-3-oxobutyl phosphate.

Belongs to the DMRL synthase family. As to quaternary structure, forms an icosahedral capsid composed of 60 subunits, arranged as a dodecamer of pentamers.

The catalysed reaction is (2S)-2-hydroxy-3-oxobutyl phosphate + 5-amino-6-(D-ribitylamino)uracil = 6,7-dimethyl-8-(1-D-ribityl)lumazine + phosphate + 2 H2O + H(+). It participates in cofactor biosynthesis; riboflavin biosynthesis; riboflavin from 2-hydroxy-3-oxobutyl phosphate and 5-amino-6-(D-ribitylamino)uracil: step 1/2. Functionally, catalyzes the formation of 6,7-dimethyl-8-ribityllumazine by condensation of 5-amino-6-(D-ribitylamino)uracil with 3,4-dihydroxy-2-butanone 4-phosphate. This is the penultimate step in the biosynthesis of riboflavin. The polypeptide is 6,7-dimethyl-8-ribityllumazine synthase (Enterobacter sp. (strain 638)).